A 226-amino-acid polypeptide reads, in one-letter code: Ribonuclease HII (226 aa).

The RNase H type-2 domain maps to 29-220 (GPVAGVDEAG…VAALLHRVDN (192 aa)). Asp-35, Glu-36, and Asp-129 together coordinate a divalent metal cation.

It belongs to the RNase HII family. It depends on Mn(2+) as a cofactor. Mg(2+) serves as cofactor.

It is found in the cytoplasm. The enzyme catalyses Endonucleolytic cleavage to 5'-phosphomonoester.. Endonuclease that specifically degrades the RNA of RNA-DNA hybrids. In Rhodococcus opacus (strain B4), this protein is Ribonuclease HII.